Consider the following 1332-residue polypeptide: Abscisic-aldehyde oxidase (1332 aa).

A 2Fe-2S ferredoxin-type domain is found at methionine 1 to leucine 88. 3 residues coordinate [2Fe-2S] cluster: cysteine 40, cysteine 45, and cysteine 48. The region spanning serine 219–alanine 400 is the FAD-binding PCMH-type domain.

The protein belongs to the xanthine dehydrogenase family. Aldehyde oxidases (AO) are homodimers and heterodimers of AO subunits. AO-delta is a AAO3 homodimer. AAO3 also forms a dimer with AAO2. Interacts with PUB44, and this interaction probably results in targeting of this protein to the proteasome. The cofactor is [2Fe-2S] cluster. FAD is required as a cofactor. Mo-molybdopterin serves as cofactor. Expressed in vascular tissues of all organs, particularly in phloem companion cells and xylem parenchymatic cells. Highly expressed in roots and rosettes, and to lower extent in seedlings, stems and flowers. Expressed at very low levels in siliques and dry seeds. Also detected in root dividing cells (tips and primordia), in mesophyll cells and inside the guard cells.

It localises to the cytoplasm. It catalyses the reaction 2-cis-(+)-abscisic aldehyde + O2 + H2O = 2-cis-(+)-abscisate + H2O2 + H(+). It carries out the reaction 1-naphthaldehyde + O2 + H2O = 1-naphthoate + H2O2 + H(+). The catalysed reaction is indole-3-acetaldehyde + O2 + H2O = (indol-3-yl)acetate + H2O2 + H(+). In terms of biological role, in higher plants aldehyde oxidases (AO) appear to be homo- and heterodimeric assemblies of AO subunits with probably different physiological functions. AO-delta may be involved in the last step of abscisic acid biosynthesis, at least in leaves and seeds. In vitro, AO-delta oxidizes abscisic aldehyde to abscisic acid (ABA). In vitro, AO-delta also uses 1-naphthaldehyde, indole-3-aldehyde (IAld), benzaldehyde and cinnamaldehyde as substrate; the AAO2-AAO3 dimer also uses abscisic aldehyde as substrate. The protein is Abscisic-aldehyde oxidase (AAO3) of Arabidopsis thaliana (Mouse-ear cress).